An 803-amino-acid polypeptide reads, in one-letter code: MAEAHQAVGFRPSLTSDGAEVELSAPVLQEIYLSGLRSWKRHLSRFWNDFLTGVFPASPLSWLFLFSAIQLAWFLQLDPSLGLMEKIKELLPDWGGQHHGLRGVLAAALFASCLWGALIFTLHVALRLLLSYHGWLLEPHGAMSSPTKTWLALVRIFSGRHPMLFSYQRSLPRQPVPSVQDTVRKYLESVRPILSDEDFDWTAVLAQEFLRLQASLLQWYLRLKSWWASNYVSDWWEEFVYLRSRNPLMVNSNYYMMDFLYVTPTPLQAARAGNAVHALLLYRHRLNRQEIPPTLLMGMRPLCSAQYEKIFNTTRIPGVQKDYIRHLHDSQHVAVFHRGRFFRMGTHSRNSLLSPRALEQQFQRILDDPSPACPHEEHLAALTAAPRGTWAQVRTSLKTQAAEALEAVEGAAFFVSLDAEPAGLTREDPAASLDAYAHALLAGRGHDRWFDKSFTLIVFSNGKLGLSVEHSWADCPISGHMWEFTLATECFQLGYSTDGHCKGHPDPTLPQPQRLQWDLPDQIHSSISLALRGAKILSENVDCHVVPFSLFGKSFIRRCHLSSDSFIQIALQLAHFRDRGQFCLTYESAMTRLFLEGRTETVRSCTREACNFVRAMEDKEKTDPQCLALFRVAVDKHQALLKAAMSGQGVDRHLFALYIVSRFLHLQSPFLTQVHSEQWQLSTSQIPVQQMHLFDVHNYPDYVSSGGGFGPADDHGYGVSYIFMGDGMITFHISSKKSSTKTDSHRLGQHIEDALLDVASLFQAGQHFKRRFRGSGKENSRHRCGFLSRQTGASKASMTSTDF.

Over methionine 1–threonine 52 the chain is Cytoplasmic. Residues glycine 53–leucine 75 traverse the membrane as a helical segment. The Lumenal portion of the chain corresponds to glutamine 76 to glycine 103. The helical transmembrane segment at valine 104 to leucine 126 threads the bilayer. At arginine 127 to phenylalanine 803 the chain is on the cytoplasmic side. Histidine 470 acts as the Proton acceptor in catalysis. Residue glycine 552–aspartate 564 participates in CoA binding. (R)-carnitine is bound by residues tyrosine 586, serine 588, and threonine 599. The segment at leucine 761–phenylalanine 803 is required for interaction with GRIA1. The interval phenylalanine 772 to phenylalanine 803 is disordered. The span at serine 788–phenylalanine 803 shows a compositional bias: polar residues.

This sequence belongs to the carnitine/choline acetyltransferase family. In terms of assembly, peripherally associated with AMPAR complex. AMPAR complex consists of an inner core made of 4 pore-forming GluA/GRIA proteins (GRIA1, GRIA2, GRIA3 and GRIA4) and 4 major auxiliary subunits arranged in a twofold symmetry. One of the two pairs of distinct binding sites is occupied either by CNIH2, CNIH3 or CACNG2, CACNG3. The other harbors CACNG2, CACNG3, CACNG4, CACNG8 or GSG1L. This inner core of AMPAR complex is complemented by outer core constituents binding directly to the GluA/GRIA proteins at sites distinct from the interaction sites of the inner core constituents. Outer core constituents include at least PRRT1, PRRT2, CKAMP44/SHISA9, FRRS1L and NRN1. The proteins of the inner and outer core serve as a platform for other, more peripherally associated AMPAR constituents, including CPT1C. Alone or in combination, these auxiliary subunits control the gating and pharmacology of the AMPAR complex and profoundly impact their biogenesis and protein processing. Interacts with SACM1L; the interaction regulates SACM1L phosphatidylinositol-3-phosphatase activity and translocation to endoplasmic reticulum/trans Golgi network in a malonyl-CoA dependent manner. Interacts with ATL1. In terms of tissue distribution, expressed predominantly in brain and testis. Expressed in motor neurons.

The protein localises to the cell projection. It is found in the dendrite. It localises to the axon. Its subcellular location is the endoplasmic reticulum membrane. The enzyme catalyses S-hexadecanoyl-L-cysteinyl-[protein] + H2O = L-cysteinyl-[protein] + hexadecanoate + H(+). In terms of biological role, palmitoyl thioesterase specifically expressed in the endoplasmic reticulum of neurons. Modulates the trafficking of the glutamate receptor, AMPAR, to plasma membrane through depalmitoylation of GRIA1. Also regulates AMPR trafficking through the regulation of SACM1L phosphatidylinositol-3-phosphatase activity by interaction in a malonyl-CoA dependent manner. Binds malonyl-CoA and couples malonyl-CoA to ceramide levels, necessary for proper spine maturation and contributing to systemic energy homeostasis and appetite control. Binds to palmitoyl-CoA, but does not have carnitine palmitoyltransferase 1 catalytic activity or at very low levels. The sequence is that of Palmitoyl thioesterase CPT1C from Homo sapiens (Human).